A 128-amino-acid polypeptide reads, in one-letter code: Large ribosomal subunit protein bL19 (128 aa).

This sequence belongs to the bacterial ribosomal protein bL19 family.

Functionally, this protein is located at the 30S-50S ribosomal subunit interface and may play a role in the structure and function of the aminoacyl-tRNA binding site. This Herminiimonas arsenicoxydans protein is Large ribosomal subunit protein bL19.